The chain runs to 288 residues: SUR7 family protein pun1 (288 aa).

Residues 1–11 (MGMGFNPIKAL) are Cytoplasmic-facing. Residues 12–32 (FTGIGTVCVGVGALLSILCII) form a helical membrane-spanning segment. N33, N50, N59, N66, N122, N153, and N160 each carry an N-linked (GlcNAc...) asparagine glycan. Residues 33–185 (NQTQHNIAFQ…GACYAMRAMY (153 aa)) are Extracellular-facing. A helical transmembrane segment spans residues 186–206 (ILGFIFFALTIVSIVISCLPF). Residues 207–210 (FGPL) lie on the Cytoplasmic side of the membrane. Residues 211 to 231 (FLNVFSFFATIFTFIAAVIAV) traverse the membrane as a helical segment. Residues 232–257 (ATYRIAISELEKNIEILNIPIVLGKK) lie on the Extracellular side of the membrane. Residues 258–278 (IYAYSFLSAAAGLAACILYFI) traverse the membrane as a helical segment. The Cytoplasmic segment spans residues 279–288 (GNLTSGYSPL).

Belongs to the SUR7 family.

The protein localises to the golgi apparatus membrane. It is found in the cell membrane. The protein resides in the cell tip. In terms of biological role, contributes to the wild-type cellular response to nitrogen stress through signaling pathways that regulate the expression of genes involved in amino acid biosynthesis. Required for wild-type filamentous growth, cell growth, and cell-cell adhesion. The polypeptide is SUR7 family protein pun1 (pun1) (Schizosaccharomyces pombe (strain 972 / ATCC 24843) (Fission yeast)).